Here is a 262-residue protein sequence, read N- to C-terminus: Putative carbamate hydrolase RutD (262 aa).

Belongs to the AB hydrolase superfamily. Hydrolase RutD family.

The catalysed reaction is carbamate + 2 H(+) = NH4(+) + CO2. Its function is as follows. Involved in pyrimidine catabolism. May facilitate the hydrolysis of carbamate, a reaction that can also occur spontaneously. This chain is Putative carbamate hydrolase RutD, found in Rhizobium rhizogenes (strain K84 / ATCC BAA-868) (Agrobacterium radiobacter).